The primary structure comprises 180 residues: Beta-lactoglobulin (180 aa).

The N-terminal stretch at 1 to 18 is a signal peptide; sequence MKCLLLALGLALACGIQA. Disulfide bonds link Cys84/Cys178, Cys124/Cys137, and Cys124/Cys139.

Belongs to the calycin superfamily. Lipocalin family. Under physiological conditions beta-lactoglobulin exists as an equilibrium mixture of monomeric and dimeric forms. Interaction with LMBR1L is controversial. In terms of processing, alternate disulfide bonds occur in equal amounts. In terms of tissue distribution, synthesized in mammary gland and secreted in milk.

It is found in the secreted. Its function is as follows. Primary component of whey, it binds retinol and is probably involved in the transport of that molecule. The polypeptide is Beta-lactoglobulin (LGB) (Capra hircus (Goat)).